A 223-amino-acid chain; its full sequence is Adenylate kinase (223 aa).

10-15 (GSGKGT) serves as a coordination point for ATP. The NMP stretch occupies residues 30 to 59 (ESGAIFREHIGGGTELGKKAKAYIDRGDLV). AMP-binding positions include Ser31, Arg36, 57 to 59 (DLV), 84 to 87 (GFPR), and Gln91. The LID stretch occupies residues 125–164 (GRRLCKNNNNHPNNIFIEAIKPNGDVCRVCGGTLSSRSDD). Arg126 contributes to the ATP binding site. The AMP site is built by Arg161 and Arg173. Residue Gly209 participates in ATP binding.

This sequence belongs to the adenylate kinase family. In terms of assembly, monomer.

It is found in the cytoplasm. It carries out the reaction AMP + ATP = 2 ADP. The protein operates within purine metabolism; AMP biosynthesis via salvage pathway; AMP from ADP: step 1/1. Its function is as follows. Catalyzes the reversible transfer of the terminal phosphate group between ATP and AMP. Plays an important role in cellular energy homeostasis and in adenine nucleotide metabolism. This chain is Adenylate kinase, found in Desulfovibrio desulfuricans (strain ATCC 27774 / DSM 6949 / MB).